We begin with the raw amino-acid sequence, 604 residues long: Complement factor I (604 aa).

Positions 1–18 (MKLALLILLLLNPHLSSS) are cleaved as a signal peptide. 20 cysteine pairs are disulfide-bonded: Cys-36/Cys-260, Cys-46/Cys-57, Cys-51/Cys-62, Cys-64/Cys-96, Cys-70/Cys-89, Cys-78/Cys-109, Cys-144/Cys-186, Cys-157/Cys-219, Cys-191/Cys-201, Cys-234/Cys-252, Cys-246/Cys-261, Cys-264/Cys-276, Cys-271/Cys-289, Cys-283/Cys-298, Cys-349/Cys-474, Cys-387/Cys-403, Cys-395/Cys-465, Cys-488/Cys-552, Cys-516/Cys-531, and Cys-542/Cys-571. N-linked (GlcNAc...) asparagine glycosylation is present at Asn-40. The Kazal-like domain occupies 58–111 (IEGTCACKLPYQCPKAGTPVCATNGRGYPTYCHLKSFECLHPEIKFSNNGTCTA). N-linked (GlcNAc...) asparagine glycans are attached at residues Asn-106, Asn-116, and Asn-182. Residues 117–217 (VSLIYGSTDT…SKAPHGLAGV (101 aa)) enclose the SRCR domain. LDL-receptor class A domains are found at residues 218–262 (VCYT…LCCK) and 263–299 (GCRG…SGCE). Ca(2+)-binding residues include Lys-244, Asp-247, Val-249, Asp-251, Asp-257, and Glu-258. Residues Asn-284, Glu-286, Asp-288, Asp-294, and Glu-295 each coordinate Ca(2+). One can recognise a Peptidase S1 domain in the interval 362 to 595 (VVGGKPAEMG…YFDWISYYVG (234 aa)). Catalysis depends on charge relay system residues His-402 and Asp-450. N-linked (GlcNAc...) asparagine glycosylation occurs at Asn-515. Residue Ser-546 is the Charge relay system of the active site. Asn-557 is a glycosylation site (N-linked (GlcNAc...) asparagine).

Belongs to the peptidase S1 family. As to quaternary structure, heterodimer of a light and heavy chains; disulfide-linked. The fully processed and mature protein circulates as a zymogen, and is allosterically activated by substrate-induced remodeling of the active site. Interacts with C3b. Interacts with complement factor H. Expressed in the liver by hepatocytes. Also present in other cells such as monocytes, fibroblasts or keratinocytes.

Its subcellular location is the secreted. It is found in the extracellular space. It catalyses the reaction Inactivates complement subcomponents C3b, iC3b and C4b by proteolytic cleavage.. Functionally, trypsin-like serine protease that plays an essential role in regulating the immune response by controlling all complement pathways. Inhibits these pathways by cleaving three peptide bonds in the alpha-chain of C3b and two bonds in the alpha-chain of C4b thereby inactivating these proteins. Essential cofactors for these reactions include factor H and C4BP in the fluid phase and membrane cofactor protein/CD46 and CR1 on cell surfaces. The presence of these cofactors on healthy cells allows degradation of deposited C3b by CFI in order to prevent undesired complement activation, while in apoptotic cells or microbes, the absence of such cofactors leads to C3b-mediated complement activation and subsequent opsonization. The sequence is that of Complement factor I (Cfi) from Rattus norvegicus (Rat).